Reading from the N-terminus, the 592-residue chain is ATP-binding protein Uup (592 aa).

2 ABC transporter domains span residues 1–221 (MPLI…RIEK) and 289–516 (FKLK…KSNI). ATP-binding positions include 36–43 (GKNGAGKS) and 321–328 (GNNGSGKS). A coiled-coil region spans residues 516–550 (ISFLKTKQNQVKKELKKVLNEIEKIENSIKTLKIQ). The C-terminal domain (CTD), binds DNA stretch occupies residues 518–592 (FLKTKQNQVK…IYWENLEKKL (75 aa)).

It belongs to the ABC transporter superfamily. ABCF family. Uup subfamily.

Its subcellular location is the cytoplasm. The enzyme catalyses ATP + H2O = ADP + phosphate + H(+). Functionally, probably plays a role in ribosome assembly or function. May be involved in resolution of branched DNA intermediates that result from template switching in postreplication gaps. Binds DNA and has ATPase activity. This is ATP-binding protein Uup from Buchnera aphidicola subsp. Schizaphis graminum (strain Sg).